Here is a 449-residue protein sequence, read N- to C-terminus: Gallate transporter (449 aa).

Helical transmembrane passes span 26–46 (WLIL…VAVM), 62–82 (AAFG…ALTA), 92–112 (KKVL…CAFA), 123–143 (LLTG…LAEY), 155–175 (IMFT…AWLI), 183–203 (VLLA…WLLP), 262–282 (LALW…MGWL), 298–318 (TITG…GWIM), 326–346 (VIAI…ALSL), 349–369 (SLLV…QTAL), 388–408 (WMLG…GAVL), and 414–434 (LPLL…AILA).

Belongs to the major facilitator superfamily. Sugar transporter (TC 2.A.1.1) family.

The protein resides in the membrane. Its function is as follows. Transporter that specifically mediates the uptake of gallate. This Pseudomonas putida (Arthrobacter siderocapsulatus) protein is Gallate transporter (galT).